Here is a 124-residue protein sequence, read N- to C-terminus: MTYLLVFLGGGLGAMFRHFINTVSGRMLGTAFPYHTFFINVSGSLVMGLIAGYFAFKGGSSQHVRLFLMTGILGGYTTFSAFSLDAALLYERGAVGLAALYVLGSVALAIAGLFAGLALIRAIT.

4 helical membrane passes run 3-23 (YLLV…INTV), 36-56 (TFFI…YFAF), 66-86 (LFLM…SLDA), and 100-120 (LYVL…LALI). Residues glycine 74 and threonine 77 each contribute to the Na(+) site.

It belongs to the fluoride channel Fluc/FEX (TC 1.A.43) family.

The protein localises to the cell inner membrane. The catalysed reaction is fluoride(in) = fluoride(out). With respect to regulation, na(+) is not transported, but it plays an essential structural role and its presence is essential for fluoride channel function. Functionally, fluoride-specific ion channel. Important for reducing fluoride concentration in the cell, thus reducing its toxicity. The sequence is that of Fluoride-specific ion channel FluC from Rhodopseudomonas palustris (strain BisB5).